We begin with the raw amino-acid sequence, 285 residues long: Shikimate dehydrogenase (NADP(+)) (285 aa).

Shikimate-binding positions include 22-24 (SMS) and Thr69. The active-site Proton acceptor is Lys73. Asp85 is an NADP(+) binding site. Asn94 and Asp110 together coordinate shikimate. Residues 136 to 140 (GAGGA), 160 to 165 (NRTVAR), and Met225 contribute to the NADP(+) site. Tyr227 lines the shikimate pocket. Gly248 lines the NADP(+) pocket.

It belongs to the shikimate dehydrogenase family. Homodimer.

The enzyme catalyses shikimate + NADP(+) = 3-dehydroshikimate + NADPH + H(+). The protein operates within metabolic intermediate biosynthesis; chorismate biosynthesis; chorismate from D-erythrose 4-phosphate and phosphoenolpyruvate: step 4/7. Functionally, involved in the biosynthesis of the chorismate, which leads to the biosynthesis of aromatic amino acids. Catalyzes the reversible NADPH linked reduction of 3-dehydroshikimate (DHSA) to yield shikimate (SA). This Caulobacter vibrioides (strain ATCC 19089 / CIP 103742 / CB 15) (Caulobacter crescentus) protein is Shikimate dehydrogenase (NADP(+)).